The primary structure comprises 395 residues: Scyllo-inosose 3-dehydrogenase (395 aa).

Residue C66 coordinates Zn(2+). Catalysis depends on charge relay system residues S68 and H71. Zn(2+) is bound by residues H95, E96, C131, C134, C137, C145, and E193. Residues I223, E243, and R248 each coordinate NAD(+).

This sequence belongs to the zinc-containing alcohol dehydrogenase family. Homodimer. The cofactor is Zn(2+).

The catalysed reaction is scyllo-inosose + NAD(+) = 3-dehydro-scyllo-inosose + NADH + H(+). Its pathway is polyol metabolism; myo-inositol metabolism. Its function is as follows. Catalyzes the NAD(+)-dependent oxidation of scyllo-inosose (2-keto-myo-inositol) to 3-dehydro-scyllo-inosose (diketo-inositol), and thus probably functions in a myo-inositol degradation pathway together with IolG, IolN and IolO. Has no activity on myo-inositol, D-chiro-inositol and 1-keto-D-chiro-inositol. The sequence is that of Scyllo-inosose 3-dehydrogenase from Thermotoga maritima (strain ATCC 43589 / DSM 3109 / JCM 10099 / NBRC 100826 / MSB8).